The chain runs to 76 residues: Small ribosomal subunit protein bS18 (76 aa).

The protein belongs to the bacterial ribosomal protein bS18 family. As to quaternary structure, part of the 30S ribosomal subunit. Forms a tight heterodimer with protein bS6.

In terms of biological role, binds as a heterodimer with protein bS6 to the central domain of the 16S rRNA, where it helps stabilize the platform of the 30S subunit. The chain is Small ribosomal subunit protein bS18 from Brevibacillus brevis (strain 47 / JCM 6285 / NBRC 100599).